Consider the following 255-residue polypeptide: Malonyl-[acyl-carrier protein] O-methyltransferase (255 aa).

The protein belongs to the methyltransferase superfamily.

The catalysed reaction is malonyl-[ACP] + S-adenosyl-L-methionine = malonyl-[ACP] methyl ester + S-adenosyl-L-homocysteine. It participates in cofactor biosynthesis; biotin biosynthesis. Its function is as follows. Converts the free carboxyl group of a malonyl-thioester to its methyl ester by transfer of a methyl group from S-adenosyl-L-methionine (SAM). It allows to synthesize pimeloyl-ACP via the fatty acid synthetic pathway. The sequence is that of Malonyl-[acyl-carrier protein] O-methyltransferase from Serratia marcescens.